Here is a 675-residue protein sequence, read N- to C-terminus: L-type lectin-domain containing receptor kinase IX.2 (675 aa).

The first 35 residues, 1–35, serve as a signal peptide directing secretion; sequence MLYFIFCQNLSSSSSMSNSILFLSLFLFLPFVVDS. Residues asparagine 9, asparagine 39, asparagine 110, asparagine 146, asparagine 179, asparagine 186, asparagine 191, and asparagine 212 are each glycosylated (N-linked (GlcNAc...) asparagine). The segment at 36-269 is legume-lectin like; that stretch reads LYFNFTSFRQ…EEHRLLSWEL (234 aa). The Extracellular segment spans residues 36 to 281; sequence LYFNFTSFRQ…SLDSDKADSR (246 aa). A helical membrane pass occupies residues 282 to 302; sequence IGLVIGISASGFVFLTFMVIT. Residues 303-675 are Cytoplasmic-facing; sequence TVVVWSRKQR…VTFSGIEYGR (373 aa). In terms of domain architecture, Protein kinase spans 350–631; the sequence is FSSHRKLGEG…KQGIQVMNFE (282 aa). ATP is bound by residues 356 to 364 and lysine 379; that span reads LGEGGFGAV. Aspartate 475 (proton acceptor) is an active-site residue.

It in the C-terminal section; belongs to the protein kinase superfamily. Ser/Thr protein kinase family. In the N-terminal section; belongs to the leguminous lectin family. In terms of assembly, interacts with ABCG40.

Its subcellular location is the cell membrane. The catalysed reaction is L-seryl-[protein] + ATP = O-phospho-L-seryl-[protein] + ADP + H(+). It catalyses the reaction L-threonyl-[protein] + ATP = O-phospho-L-threonyl-[protein] + ADP + H(+). Promotes hydrogen peroxide H(2)O(2) production and cell death. Its function is as follows. Involved in resistance response to the pathogenic oomycetes Phytophthora infestans and Phytophthora capsici. The polypeptide is L-type lectin-domain containing receptor kinase IX.2 (Arabidopsis thaliana (Mouse-ear cress)).